A 59-amino-acid chain; its full sequence is Large ribosomal subunit protein uL30 (59 aa).

Belongs to the universal ribosomal protein uL30 family. As to quaternary structure, part of the 50S ribosomal subunit.

The chain is Large ribosomal subunit protein uL30 from Leptospira interrogans serogroup Icterohaemorrhagiae serovar copenhageni (strain Fiocruz L1-130).